The chain runs to 32 residues: Phallacidin proprotein (32 aa).

Positions 1–10 are excised as a propeptide; the sequence is MSDINATRLP. A cross-link (cyclopeptide (Ala-Pro)) is located at residues 11 to 17; that stretch reads AWLVDCP. Residues 12-16 constitute a cross-link (2'-cysteinyl-6'-hydroxytryptophan sulfoxide (Trp-Cys)); it reads WLVDC. The propeptide occupies 18-32; that stretch reads CVGDDINRLLTRGEK.

The protein belongs to the MSDIN fungal toxin family. Post-translationally, processed by the macrocyclase-peptidase enzyme POPB to yield a toxic cyclic heptapeptide. POPB first removes 10 residues from the N-terminus. Conformational trapping of the remaining peptide forces the enzyme to release this intermediate rather than proceed to macrocyclization. The enzyme rebinds the remaining peptide in a different conformation and catalyzes macrocyclization of the N-terminal 7 residues.

Its function is as follows. Major toxin that belongs to the bicyclic heptapeptides called phallotoxins. Although structurally related to amatoxins, phallotoxins have a different mode of action, which is the stabilization of F-actin. Phallotoxins are poisonous when administered parenterally, but not orally because of poor absorption. The chain is Phallacidin proprotein from Amanita pallidorosea.